The sequence spans 697 residues: DNA ligase (697 aa).

Residues 34–38 (DKTYD), 83–84 (SL), and Glu114 each bind NAD(+). The active-site N6-AMP-lysine intermediate is Lys116. Residues Arg137, Glu171, Lys315, and Lys339 each contribute to the NAD(+) site. Zn(2+) is bound by residues Cys430, Cys433, Cys448, and Cys453. The 82-residue stretch at 616-697 (KKSSKLNNLN…FHNLLKEENA (82 aa)) folds into the BRCT domain.

The protein belongs to the NAD-dependent DNA ligase family. LigA subfamily. The cofactor is Mg(2+). It depends on Mn(2+) as a cofactor.

The enzyme catalyses NAD(+) + (deoxyribonucleotide)n-3'-hydroxyl + 5'-phospho-(deoxyribonucleotide)m = (deoxyribonucleotide)n+m + AMP + beta-nicotinamide D-nucleotide.. DNA ligase that catalyzes the formation of phosphodiester linkages between 5'-phosphoryl and 3'-hydroxyl groups in double-stranded DNA using NAD as a coenzyme and as the energy source for the reaction. It is essential for DNA replication and repair of damaged DNA. The sequence is that of DNA ligase from Mycoplasmopsis synoviae (strain 53) (Mycoplasma synoviae).